Reading from the N-terminus, the 162-residue chain is Flagellar assembly factor FliW (162 aa).

This sequence belongs to the FliW family. In terms of assembly, interacts with translational regulator CsrA and flagellin(s).

The protein resides in the cytoplasm. In terms of biological role, acts as an anti-CsrA protein, binds CsrA and prevents it from repressing translation of its target genes, one of which is flagellin. Binds to flagellin and participates in the assembly of the flagellum. The chain is Flagellar assembly factor FliW from Magnetococcus marinus (strain ATCC BAA-1437 / JCM 17883 / MC-1).